A 154-amino-acid polypeptide reads, in one-letter code: Urease subunit alpha (154 aa).

Residues 38–154 form the Urease domain; that stretch reads GGIDTHIHFI…ADEMDIQVAI (117 aa). Positions 43, 45, and 126 each coordinate Ni(2+). The residue at position 126 (lysine 126) is an N6-carboxylysine. Histidine 128 provides a ligand contact to substrate.

The protein belongs to the metallo-dependent hydrolases superfamily. Urease alpha subunit family. In terms of assembly, heterotrimer of UreA (gamma), UreB (beta) and UreC (alpha) subunits. Three heterotrimers associate to form the active enzyme. The cofactor is Ni cation. In terms of processing, carboxylation allows a single lysine to coordinate two nickel ions.

The protein resides in the cytoplasm. The enzyme catalyses urea + 2 H2O + H(+) = hydrogencarbonate + 2 NH4(+). The protein operates within nitrogen metabolism; urea degradation; CO(2) and NH(3) from urea (urease route): step 1/1. This Photobacterium damselae subsp. damselae (Listonella damsela) protein is Urease subunit alpha (ureC).